Here is an 85-residue protein sequence, read N- to C-terminus: Neurotoxin beta-KTx 17 (85 aa).

Residues 1–20 form the signal peptide; the sequence is MKQYIFFLALIVLVSTFAEA. Positions 21–37 are excised as a propeptide; sequence GKKTEILDKVKKVFSKG. The region spanning 49–85 is the BetaSPN-type CS-alpha/beta domain; the sequence is ELGCPFIEKWCEDHCESKKQVGKCENFDCSCVKLGGK. Cystine bridges form between Cys52–Cys72, Cys59–Cys77, and Cys63–Cys79.

The protein belongs to the long chain scorpion toxin family. Class 2 subfamily. Expressed by the venom gland.

It is found in the secreted. Functionally, has a very weak effect to block voltage-gated potassium channel Kv1.1/KCNA1. This is Neurotoxin beta-KTx 17 from Lychas mucronatus (Chinese swimming scorpion).